The chain runs to 340 residues: HPr kinase/phosphorylase (340 aa).

Residues His153 and Lys174 contribute to the active site. Position 168 to 175 (Gly168 to Ser175) interacts with ATP. Ser175 lines the Mg(2+) pocket. Asp192 acts as the Proton acceptor; for phosphorylation activity. Proton donor; for dephosphorylation activity in catalysis. The important for the catalytic mechanism of both phosphorylation and dephosphorylation stretch occupies residues Met216–Asp225. Glu217 provides a ligand contact to Mg(2+). The active site involves Arg258. The interval Pro279 to Lys284 is important for the catalytic mechanism of dephosphorylation.

This sequence belongs to the HPrK/P family. As to quaternary structure, homohexamer. The cofactor is Mg(2+).

The enzyme catalyses [HPr protein]-L-serine + ATP = [HPr protein]-O-phospho-L-serine + ADP + H(+). It carries out the reaction [HPr protein]-O-phospho-L-serine + phosphate + H(+) = [HPr protein]-L-serine + diphosphate. In terms of biological role, catalyzes the ATP- as well as the pyrophosphate-dependent phosphorylation of a specific serine residue in HPr, a phosphocarrier protein of the phosphoenolpyruvate-dependent sugar phosphotransferase system (PTS). HprK/P also catalyzes the pyrophosphate-producing, inorganic phosphate-dependent dephosphorylation (phosphorolysis) of seryl-phosphorylated HPr (P-Ser-HPr). The polypeptide is HPr kinase/phosphorylase (Prosthecochloris aestuarii (strain DSM 271 / SK 413)).